Reading from the N-terminus, the 224-residue chain is Adenylate kinase (224 aa).

An ATP-binding site is contributed by 10 to 15 (GSGKST). The tract at residues 30–59 (SSGDLIRGEIERKSSLGLEMAAYLSRGDLI) is NMP. Residues serine 31, arginine 36, 57-59 (DLI), 83-86 (GYPR), and glutamine 90 each bind AMP. The interval 124–161 (GRRICPNCGAVYHITYNPPKVPGICDVCGTKLIQRTDD) is LID. ATP is bound at residue arginine 125. Zn(2+) contacts are provided by cysteine 128 and cysteine 131. 134–135 (VY) contacts ATP. Residues cysteine 148 and cysteine 151 each coordinate Zn(2+). 2 residues coordinate AMP: arginine 158 and arginine 169. ATP is bound at residue glycine 197.

It belongs to the adenylate kinase family. In terms of assembly, monomer.

The protein resides in the cytoplasm. The enzyme catalyses AMP + ATP = 2 ADP. Its pathway is purine metabolism; AMP biosynthesis via salvage pathway; AMP from ADP: step 1/1. Catalyzes the reversible transfer of the terminal phosphate group between ATP and AMP. Plays an important role in cellular energy homeostasis and in adenine nucleotide metabolism. This chain is Adenylate kinase, found in Thermococcus gammatolerans (strain DSM 15229 / JCM 11827 / EJ3).